A 654-amino-acid chain; its full sequence is Pentatricopeptide repeat-containing protein At5g61400 (654 aa).

16 PPR repeats span residues 37–71 (SSFSSSSLAEAILKCRSAEEAFKLFETSSRSRVSK), 74–104 (DLQSFSAVIHVLTGAHKYTLARCLIKSLIER), 131–161 (SIGVFSLLIMEFLEMGLFEEALWVSREMKCS), 163–197 (DSKACLSILNGLVRRRRFDSVWVDYQLMISRGLVP), 198–232 (DVHIYFVLFQCCFKQGLYSKKEKLLDEMTSLGIKP), 233–267 (NVYIYTIYILDLCRDNKMEEAEKMFELMKKHGVLP), 268–302 (NLYTYSAMIDGYCKTGNVRQAYGLYKEILVAELLP), 303–337 (NVVVFGTLVDGFCKARELVTARSLFVHMVKFGVDP), 338–372 (NLYVYNCLIHGHCKSGNMLEAVGLLSEMESLNLSP), 373–407 (DVFTYTILINGLCIEDQVAEANRLFQKMKNERIFP), 408–442 (SSATYNSLIHGYCKEYNMEQALDLCSEMTASGVEP), 443–477 (NIITFSTLIDGYCNVRDIKAAMGLYFEMTIKGIVP), 478–512 (DVVTYTALIDAHFKEANMKEALRLYSDMLEAGIHP), 513–543 (NDHTFACLVDGFWKEGRLSVAIDFYQENNQQ), 548–582 (NHVGFTCLIEGLCQNGYILRASRFFSDMRSCGITP), and 583–617 (DICSYVSMLKGHLQEKRITDTMMLQCDMIKTGILP).

The protein belongs to the PPR family. P subfamily.

The sequence is that of Pentatricopeptide repeat-containing protein At5g61400 from Arabidopsis thaliana (Mouse-ear cress).